The following is a 345-amino-acid chain: MNINDILKKLINKSDLEIDEAEELAKAIIRGEVPEILVSAILVALRMKGESKNEIVGFARAMRELAIKIDVPNAIDTAGTGGDGLGTVNVSTASAILLSLINPVAKHGNRAVSGKSGSADVLEALGYNIIVPPERAKELVHKTNFVFLFSQYYHPAMKNVANVRKTLGIRTIFNILGPLTNPANAKYQLMGVFSKDHLDLLSKSAYELDFNKVILVHGEPGIDEVSPIGKTFMKIVSKRGIEEVKFDVTDFGISSIPIDKLIVNSAEDSAIKIVRAFLGKDEHVAEFIKINTAVALFALDKVSDFKEGYEYAKYLIENSVNKLNEIISLNGDLTKLKTIMVKSSG.

5-phospho-alpha-D-ribose 1-diphosphate contacts are provided by residues glycine 79, 82–83 (GD), threonine 87, 89–92 (NVST), 106–114 (KHGNRAVSG), and serine 118. Residue glycine 79 participates in anthranilate binding. Serine 91 is a Mg(2+) binding site. Residue asparagine 109 coordinates anthranilate. Arginine 164 is an anthranilate binding site. Mg(2+)-binding residues include aspartate 223 and glutamate 224.

Belongs to the anthranilate phosphoribosyltransferase family. Homodimer. Requires Mg(2+) as cofactor.

The catalysed reaction is N-(5-phospho-beta-D-ribosyl)anthranilate + diphosphate = 5-phospho-alpha-D-ribose 1-diphosphate + anthranilate. It functions in the pathway amino-acid biosynthesis; L-tryptophan biosynthesis; L-tryptophan from chorismate: step 2/5. Its function is as follows. Catalyzes the transfer of the phosphoribosyl group of 5-phosphorylribose-1-pyrophosphate (PRPP) to anthranilate to yield N-(5'-phosphoribosyl)-anthranilate (PRA). The protein is Anthranilate phosphoribosyltransferase of Saccharolobus islandicus (strain M.16.27) (Sulfolobus islandicus).